Reading from the N-terminus, the 1019-residue chain is TOG array regulator of axonemal microtubules protein 2 (1019 aa).

4 disordered regions span residues 28–54 (AGPR…PEPR), 131–158 (RRLS…PLHS), 249–311 (TPSR…AKKP), and 991–1019 (SLGG…FQLD). Polar residues predominate over residues 1007–1019 (SKTTGSSYPFQLD).

It belongs to the Crescerin family.

The chain is TOG array regulator of axonemal microtubules protein 2 from Homo sapiens (Human).